The chain runs to 127 residues: Fluoride-specific ion channel FluC (127 aa).

A run of 4 helical transmembrane segments spans residues 1 to 21 (MMSYLIVFFGAGIGGMARHMV), 32 to 52 (EFPFGTLFINMLGSFLIGAVV), 71 to 91 (TGILGGFTTFSAFSLETVLLY), and 96 to 116 (VFLAASYAVASVTLSVGALLL). Na(+) contacts are provided by Gly-75 and Thr-78.

The protein belongs to the fluoride channel Fluc/FEX (TC 1.A.43) family.

It is found in the cell inner membrane. It catalyses the reaction fluoride(in) = fluoride(out). Its activity is regulated as follows. Na(+) is not transported, but it plays an essential structural role and its presence is essential for fluoride channel function. Functionally, fluoride-specific ion channel. Important for reducing fluoride concentration in the cell, thus reducing its toxicity. This chain is Fluoride-specific ion channel FluC, found in Granulibacter bethesdensis (strain ATCC BAA-1260 / CGDNIH1).